The sequence spans 290 residues: Lysine export transcriptional regulatory protein LysG (290 aa).

Positions 1–57 (MNPIQLDTLLSIIDEGSFEGASLALSISPSAVSQRVKALEHHVGRVLVSRTQPAKAT) constitute an HTH lysR-type domain. Residues 18 to 37 (FEGASLALSISPSAVSQRVK) constitute a DNA-binding region (H-T-H motif).

The protein belongs to the LysR transcriptional regulatory family.

Functionally, positively regulates the expression of the exporter LysE. Induction requires the presence of a coinducer, which is either intracellular L-lysine, L-arginine or L-citrulline. L-histidine also acts as a coinducer of lysE expression, but this amino acid is not exported by LysE. The lysEG system prevents bacteriostasis due to elevated L-lysine or L-arginine concentrations that arise during growth in the presence of peptides or in mutants possessing a deregulated biosynthesis pathway. The polypeptide is Lysine export transcriptional regulatory protein LysG (Corynebacterium glutamicum (strain ATCC 13032 / DSM 20300 / JCM 1318 / BCRC 11384 / CCUG 27702 / LMG 3730 / NBRC 12168 / NCIMB 10025 / NRRL B-2784 / 534)).